Consider the following 433-residue polypeptide: Homogentisate 1,2-dioxygenase (433 aa).

His-288 acts as the Proton acceptor in catalysis. The Fe cation site is built by His-331 and Glu-337. Tyr-346 and His-367 together coordinate homogentisate. Fe cation is bound at residue His-367.

Belongs to the homogentisate dioxygenase family. As to quaternary structure, hexamer; dimer of trimers. It depends on Fe cation as a cofactor.

The catalysed reaction is homogentisate + O2 = 4-maleylacetoacetate + H(+). It participates in amino-acid degradation; L-phenylalanine degradation; acetoacetate and fumarate from L-phenylalanine: step 4/6. Involved in the catabolism of homogentisate (2,5-dihydroxyphenylacetate or 2,5-OH-PhAc), a central intermediate in the degradation of phenylalanine and tyrosine. Catalyzes the oxidative ring cleavage of the aromatic ring of homogentisate to yield maleylacetoacetate. The polypeptide is Homogentisate 1,2-dioxygenase (Pseudomonas putida (strain GB-1)).